The primary structure comprises 398 residues: Chalcone synthase 1 (398 aa).

58 to 65 serves as a coordination point for CoA; the sequence is KFKRMCDK. Cys-167 (acyl-thioester intermediate) is an active-site residue. Residues Thr-200 and 219–220 contribute to the substrate site; that span reads GD. Ala-311 is a CoA binding site.

Belongs to the thiolase-like superfamily. Chalcone/stilbene synthases family. As to quaternary structure, homodimer.

The catalysed reaction is (E)-4-coumaroyl-CoA + 3 malonyl-CoA + 3 H(+) = 2',4,4',6'-tetrahydroxychalcone + 3 CO2 + 4 CoA. It participates in secondary metabolite biosynthesis; flavonoid biosynthesis. In terms of biological role, the primary product of this enzyme is 4,2',4',6'-tetrahydroxychalcone (also termed naringenin-chalcone or chalcone) which can under specific conditions spontaneously isomerize into naringenin. This Oryza sativa subsp. japonica (Rice) protein is Chalcone synthase 1 (CHS1).